A 326-amino-acid polypeptide reads, in one-letter code: tRNA(Ile)-lysidine synthase (326 aa).

23 to 28 (SGGVDS) lines the ATP pocket.

The protein belongs to the tRNA(Ile)-lysidine synthase family.

Its subcellular location is the cytoplasm. It carries out the reaction cytidine(34) in tRNA(Ile2) + L-lysine + ATP = lysidine(34) in tRNA(Ile2) + AMP + diphosphate + H(+). Functionally, ligates lysine onto the cytidine present at position 34 of the AUA codon-specific tRNA(Ile) that contains the anticodon CAU, in an ATP-dependent manner. Cytidine is converted to lysidine, thus changing the amino acid specificity of the tRNA from methionine to isoleucine. This Wolinella succinogenes (strain ATCC 29543 / DSM 1740 / CCUG 13145 / JCM 31913 / LMG 7466 / NCTC 11488 / FDC 602W) (Vibrio succinogenes) protein is tRNA(Ile)-lysidine synthase.